Consider the following 134-residue polypeptide: STAG3-like protein 3 (134 aa).

Residues 10–95 form the SCD domain; the sequence is PKVTCRDVLP…GCFKDWMVSM (86 aa).

This sequence belongs to the SCC3 family.

It localises to the nucleus. This chain is STAG3-like protein 3 (STAG3L3), found in Homo sapiens (Human).